The chain runs to 665 residues: DNA ligase (665 aa).

NAD(+) contacts are provided by residues 31 to 35, 80 to 81, and glutamate 111; these read DEEFD and SL. Catalysis depends on lysine 113, which acts as the N6-AMP-lysine intermediate. Arginine 134, glutamate 171, lysine 287, and lysine 311 together coordinate NAD(+). Positions 405, 408, 423, and 429 each coordinate Zn(2+). Positions 588 to 665 constitute a BRCT domain; sequence FTNHAFQGKI…NEKEFISLCH (78 aa).

It belongs to the NAD-dependent DNA ligase family. LigA subfamily. Mg(2+) is required as a cofactor. It depends on Mn(2+) as a cofactor.

It carries out the reaction NAD(+) + (deoxyribonucleotide)n-3'-hydroxyl + 5'-phospho-(deoxyribonucleotide)m = (deoxyribonucleotide)n+m + AMP + beta-nicotinamide D-nucleotide.. In terms of biological role, DNA ligase that catalyzes the formation of phosphodiester linkages between 5'-phosphoryl and 3'-hydroxyl groups in double-stranded DNA using NAD as a coenzyme and as the energy source for the reaction. It is essential for DNA replication and repair of damaged DNA. The chain is DNA ligase from Protochlamydia amoebophila (strain UWE25).